Here is a 242-residue protein sequence, read N- to C-terminus: Ribosomal RNA small subunit methyltransferase G (242 aa).

Residues G82, F87, 133 to 134, and R152 contribute to the S-adenosyl-L-methionine site; that span reads AE.

It belongs to the methyltransferase superfamily. RNA methyltransferase RsmG family.

It localises to the cytoplasm. Specifically methylates the N7 position of a guanine in 16S rRNA. The protein is Ribosomal RNA small subunit methyltransferase G of Acetivibrio thermocellus (strain ATCC 27405 / DSM 1237 / JCM 9322 / NBRC 103400 / NCIMB 10682 / NRRL B-4536 / VPI 7372) (Clostridium thermocellum).